The sequence spans 330 residues: Probable aldo-keto reductase 6 (330 aa).

The Proton donor role is filled by tyrosine 64. Histidine 132 contributes to the substrate binding site. 211–221 (SPLGRGFLGLP) is an NADP(+) binding site.

It belongs to the aldo/keto reductase family.

This is Probable aldo-keto reductase 6 from Arabidopsis thaliana (Mouse-ear cress).